We begin with the raw amino-acid sequence, 252 residues long: Imidazole glycerol phosphate synthase subunit HisF (252 aa).

Active-site residues include Asp-11 and Asp-130.

This sequence belongs to the HisA/HisF family. As to quaternary structure, heterodimer of HisH and HisF.

The protein localises to the cytoplasm. The enzyme catalyses 5-[(5-phospho-1-deoxy-D-ribulos-1-ylimino)methylamino]-1-(5-phospho-beta-D-ribosyl)imidazole-4-carboxamide + L-glutamine = D-erythro-1-(imidazol-4-yl)glycerol 3-phosphate + 5-amino-1-(5-phospho-beta-D-ribosyl)imidazole-4-carboxamide + L-glutamate + H(+). It participates in amino-acid biosynthesis; L-histidine biosynthesis; L-histidine from 5-phospho-alpha-D-ribose 1-diphosphate: step 5/9. Functionally, IGPS catalyzes the conversion of PRFAR and glutamine to IGP, AICAR and glutamate. The HisF subunit catalyzes the cyclization activity that produces IGP and AICAR from PRFAR using the ammonia provided by the HisH subunit. In Moorella thermoacetica (strain ATCC 39073 / JCM 9320), this protein is Imidazole glycerol phosphate synthase subunit HisF.